Reading from the N-terminus, the 953-residue chain is 2-oxoglutarate dehydrogenase E1 component (953 aa).

This sequence belongs to the alpha-ketoglutarate dehydrogenase family. As to quaternary structure, homodimer. Part of the 2-oxoglutarate dehydrogenase (OGDH) complex composed of E1 (2-oxoglutarate dehydrogenase), E2 (dihydrolipoamide succinyltransferase) and E3 (dihydrolipoamide dehydrogenase); the complex contains multiple copies of the three enzymatic components (E1, E2 and E3). Thiamine diphosphate serves as cofactor.

The enzyme catalyses N(6)-[(R)-lipoyl]-L-lysyl-[protein] + 2-oxoglutarate + H(+) = N(6)-[(R)-S(8)-succinyldihydrolipoyl]-L-lysyl-[protein] + CO2. Its function is as follows. E1 component of the 2-oxoglutarate dehydrogenase (OGDH) complex which catalyzes the decarboxylation of 2-oxoglutarate, the first step in the conversion of 2-oxoglutarate to succinyl-CoA and CO(2). The protein is 2-oxoglutarate dehydrogenase E1 component of Oceanobacillus iheyensis (strain DSM 14371 / CIP 107618 / JCM 11309 / KCTC 3954 / HTE831).